Consider the following 551-residue polypeptide: Cation/acetate symporter ActP (551 aa).

Helical transmembrane passes span 8–28, 35–55, 78–98, 105–125, 151–171, 185–205, 208–228, 264–284, 305–325, 357–377, 406–426, 430–450, 465–485, and 496–516; these read ALAA…TGAV, WQAI…TYWA, GLAI…SALV, GLIY…LIAE, LSAC…MVGA, VAVV…GMLA, WVQI…AFMV, ISAL…PHIL, GFMG…IMLV, LFLG…VAGL, VSKI…ILFE, IAFM…PIIL, VGGW…PTIW, and FPYE…IWVF.

The protein belongs to the sodium:solute symporter (SSF) (TC 2.A.21) family.

The protein resides in the cell inner membrane. In terms of biological role, transports acetate. This chain is Cation/acetate symporter ActP, found in Klebsiella pneumoniae (strain 342).